Here is a 221-residue protein sequence, read N- to C-terminus: 7-cyano-7-deazaguanine synthase (221 aa).

12 to 22 lines the ATP pocket; the sequence is FSGGQDSTTCL. Zn(2+)-binding residues include Cys-190, Cys-199, Cys-202, and Cys-205.

It belongs to the QueC family. As to quaternary structure, homodimer. Zn(2+) is required as a cofactor.

The catalysed reaction is 7-carboxy-7-deazaguanine + NH4(+) + ATP = 7-cyano-7-deazaguanine + ADP + phosphate + H2O + H(+). It functions in the pathway purine metabolism; 7-cyano-7-deazaguanine biosynthesis. Catalyzes the ATP-dependent conversion of 7-carboxy-7-deazaguanine (CDG) to 7-cyano-7-deazaguanine (preQ(0)). The chain is 7-cyano-7-deazaguanine synthase from Clostridium novyi (strain NT).